The chain runs to 178 residues: Mediator of RNA polymerase II transcription subunit 28 (178 aa).

A disordered region spans residues 1–43 (MAASLGGMFAGQPPGPPPPPPGLPGQASLLQAAPGAPRPSNST). The span at 13–23 (PPGPPPPPPGL) shows a compositional bias: pro residues. A coiled-coil region spans residues 109–145 (QVIKEDVSELRSELQRKDALVQKHLTKLRHWQQVLED).

It belongs to the Mediator complex subunit 28 family. Forms a ternary complex with NF2/merlin and GRB2. Binds to actin. Component of the Mediator complex, which is probably composed of MED1, MED4, MED6, MED7, MED8, MED9, MED10, MED11, MED12, MED13, MED13L, MED14, MED15, MED16, MED17, MED18, MED19, MED20, MED21, MED22, MED23, MED24, MED25, MED26, MED27, MED29, MED30, MED31, CCNC, CDK8 and CDC2L6/CDK11. The MED12, MED13, CCNC and CDK8 subunits form a distinct module termed the CDK8 module. Mediator containing the CDK8 module is less active than Mediator lacking this module in supporting transcriptional activation. Individual preparations of the Mediator complex lacking one or more distinct subunits have been variously termed ARC, CRSP, DRIP, PC2, SMCC and TRAP.

It localises to the nucleus. It is found in the cytoplasm. The protein resides in the membrane. May be part of a complex containing NF2/merlin that participates in cellular signaling to the actin cytoskeleton downstream of tyrosine kinase signaling pathways. Component of the Mediator complex, a coactivator involved in the regulated transcription of nearly all RNA polymerase II-dependent genes. Mediator functions as a bridge to convey information from gene-specific regulatory proteins to the basal RNA polymerase II transcription machinery. Mediator is recruited to promoters by direct interactions with regulatory proteins and serves as a scaffold for the assembly of a functional preinitiation complex with RNA polymerase II and the general transcription factors. The polypeptide is Mediator of RNA polymerase II transcription subunit 28 (Med28) (Rattus norvegicus (Rat)).